A 115-amino-acid chain; its full sequence is Large ribosomal subunit protein bL20 (115 aa).

It belongs to the bacterial ribosomal protein bL20 family.

In terms of biological role, binds directly to 23S ribosomal RNA and is necessary for the in vitro assembly process of the 50S ribosomal subunit. It is not involved in the protein synthesizing functions of that subunit. The polypeptide is Large ribosomal subunit protein bL20 (Methylococcus capsulatus (strain ATCC 33009 / NCIMB 11132 / Bath)).